A 362-amino-acid chain; its full sequence is D-alanine--D-alanine ligase (362 aa).

Residues 141 to 346 enclose the ATP-grasp domain; that stretch reads KNIFAEAGLN…YPELIEELIR (206 aa). Residue 174-229 coordinates ATP; that stretch reads EEALGYPCFVKPANLGSSVGINKCKDREELEKAFEEAFQFDRKIIVEENIIGREVE. 3 residues coordinate Mg(2+): aspartate 300, glutamate 313, and asparagine 315.

It belongs to the D-alanine--D-alanine ligase family. Requires Mg(2+) as cofactor. The cofactor is Mn(2+).

The protein resides in the cytoplasm. The catalysed reaction is 2 D-alanine + ATP = D-alanyl-D-alanine + ADP + phosphate + H(+). Its pathway is cell wall biogenesis; peptidoglycan biosynthesis. Functionally, cell wall formation. The protein is D-alanine--D-alanine ligase of Bacillus cytotoxicus (strain DSM 22905 / CIP 110041 / 391-98 / NVH 391-98).